Consider the following 494-residue polypeptide: Alpha-amylase-related protein (494 aa).

The first 20 residues, 1–20 (MFKFALALTLCLAGASLSLA), serve as a signal peptide directing secretion. At Q21 the chain carries Pyrrolidone carboxylic acid. An intrachain disulfide couples C48 to C104. 3 residues coordinate Ca(2+): N118, Q169, and D178. A disulfide bridge links C157 with C171. R206 is a chloride binding site. The Nucleophile role is filled by D208. H212 serves as a coordination point for Ca(2+). E245 acts as the Proton donor in catalysis. The chloride site is built by N308 and R343. 3 disulfides stabilise this stretch: C376-C382, C418-C441, and C448-C460.

The protein belongs to the glycosyl hydrolase 13 family. Monomer. Requires Ca(2+) as cofactor. Chloride serves as cofactor.

It localises to the secreted. It carries out the reaction Endohydrolysis of (1-&gt;4)-alpha-D-glucosidic linkages in polysaccharides containing three or more (1-&gt;4)-alpha-linked D-glucose units.. This is Alpha-amylase-related protein (Amyrel) from Drosophila punjabiensis (Fruit fly).